A 521-amino-acid chain; its full sequence is MFFIEHPFVYLGLDLIVGCLIGFFLRKQLVERQQQNIQAQSKQIIENAIIDAEQLKKEALLQSKEEVYQIKQSLEAEVKLERDDLKDEHRQLKKQRDNIKRENERFEKRQSRHVVAEKALERRLREVDVKHEEADNEILKQRDELARIAGITQDEAKKLLMESIESEAQMDAAKRLSKIENEMKLEADRKARSILALAICRYAGDYVADKTVSMVPLPSDEMKGRIIGREGRNIRAIEAATGIDIIIDDTPEAVILSGFNPVRREVARLALIQLISDGRIHPGRIEEVVEKVSKELDEVMCEAGEQATFDVGAHGVHVELIKLLGRLRYRTSYGQNVLQHSLEVAFLCGIMAAELGIDVKMAKRAGLLHDIGKAVDHEVEGSHAVIGRDLAKKYGEPDEIVYAIGAHHADQPPKSVLDILVQAADALSGARPGARKEMLQSYVKRLEDLEAIANKFPGVDKSYAIQAGRDLRIIADAQKISDAEATLLSRNIAASIEEKLTYPGQIRVTVIRETRSVEYAK.

The chain crosses the membrane as a helical span at residues 1-21; it reads MFFIEHPFVYLGLDLIVGCLI. The region spanning 211–271 is the KH domain; that stretch reads TVSMVPLPSD…VRREVARLAL (61 aa). The 94-residue stretch at 337-430 folds into the HD domain; it reads VLQHSLEVAF…VQAADALSGA (94 aa).

This sequence belongs to the RNase Y family.

The protein localises to the cell membrane. Endoribonuclease that initiates mRNA decay. The chain is Ribonuclease Y from Desulfotalea psychrophila (strain LSv54 / DSM 12343).